We begin with the raw amino-acid sequence, 208 residues long: Small ribosomal subunit protein uS4 (208 aa).

Positions 99 to 165 (RRLDNVVFQL…PRLKEILSSL (67 aa)) constitute an S4 RNA-binding domain.

It belongs to the universal ribosomal protein uS4 family. As to quaternary structure, part of the 30S ribosomal subunit. Contacts protein S5. The interaction surface between S4 and S5 is involved in control of translational fidelity.

Functionally, one of the primary rRNA binding proteins, it binds directly to 16S rRNA where it nucleates assembly of the body of the 30S subunit. With S5 and S12 plays an important role in translational accuracy. The protein is Small ribosomal subunit protein uS4 of Desulfitobacterium hafniense (strain Y51).